The sequence spans 218 residues: UPF0177 protein YaiF (218 aa).

5 helical membrane-spanning segments follow: residues 8 to 28 (SIII…AVFL), 48 to 68 (FIIL…KCGF), 81 to 101 (ILLI…VVQF), 123 to 143 (ILSS…APIL), and 163 to 183 (FFLS…DILG).

Belongs to the UPF0177 family.

The protein resides in the cell membrane. The sequence is that of UPF0177 protein YaiF (yaiF) from Lactococcus lactis subsp. lactis (strain IL1403) (Streptococcus lactis).